The chain runs to 372 residues: Transcription factor YY2 (372 aa).

Residues 32 to 102 are mediates transcriptional activation; sequence MEDIPTESVQ…SDNQLGNDLE (71 aa). Low complexity predominate over residues 126–136; it reads SAASTSTSTQS. Disordered stretches follow at residues 126–172 and 186–210; these read SAAS…WEQK and TMWS…PPDY. A compositionally biased stretch (basic residues) spans 137–146; it reads RSKKPSKKPS. 2 stretches are compositionally biased toward polar residues: residues 154–165 and 186–196; these read EANPAGSSSSLG and TMWSPNDNNDQ. The interval 237–372 is mediates transcriptional repression; sequence EFTKVKPKRS…LTHVKTKNNP (136 aa). C2H2-type zinc fingers lie at residues 254 to 278, 283 to 305, 311 to 335, and 341 to 365; these read VPCS…LHIH, HVCA…QLVH, FQCT…LRIH, and FVCP…ILTH.

This sequence belongs to the YY transcription factor family. As to expression, expressed in kidney, liver, spleen and testis but not in colon.

Its subcellular location is the nucleus. In terms of biological role, functions as a multifunctional transcription factor that may exhibit positive and negative control on a large number of genes. May antagonize YY1 and function in development and differentiation. This Homo sapiens (Human) protein is Transcription factor YY2 (YY2).